The chain runs to 404 residues: Cysteine desulfurase IscS (404 aa).

Residues 75–76 (AT), N155, Q183, and 203–205 (SAH) contribute to the pyridoxal 5'-phosphate site. N6-(pyridoxal phosphate)lysine is present on K206. T243 provides a ligand contact to pyridoxal 5'-phosphate. The active-site Cysteine persulfide intermediate is the C328. A [2Fe-2S] cluster-binding site is contributed by C328.

The protein belongs to the class-V pyridoxal-phosphate-dependent aminotransferase family. NifS/IscS subfamily. As to quaternary structure, homodimer. Forms a heterotetramer with IscU, interacts with other sulfur acceptors. It depends on pyridoxal 5'-phosphate as a cofactor.

The protein resides in the cytoplasm. The enzyme catalyses (sulfur carrier)-H + L-cysteine = (sulfur carrier)-SH + L-alanine. It participates in cofactor biosynthesis; iron-sulfur cluster biosynthesis. Functionally, master enzyme that delivers sulfur to a number of partners involved in Fe-S cluster assembly, tRNA modification or cofactor biosynthesis. Catalyzes the removal of elemental sulfur atoms from cysteine to produce alanine. Functions as a sulfur delivery protein for Fe-S cluster synthesis onto IscU, an Fe-S scaffold assembly protein, as well as other S acceptor proteins. The chain is Cysteine desulfurase IscS from Proteus mirabilis (strain HI4320).